We begin with the raw amino-acid sequence, 87 residues long: Guanine nucleotide-binding protein subunit gamma (87 aa).

Residue cysteine 84 is modified to Cysteine methyl ester. Cysteine 84 carries S-geranylgeranyl cysteine lipidation. Positions leucine 85–valine 87 are cleaved as a propeptide — removed in mature form.

Belongs to the G protein gamma family. In terms of assembly, g proteins are composed of 3 units, alpha, beta and gamma. The N-terminus is blocked.

The protein localises to the cell membrane. Guanine nucleotide-binding proteins (G proteins) are involved as a modulator or transducer in various transmembrane signaling systems. This major G-protein of the squid photoreceptor is involved in visual transduction. The beta and gamma chains are required for the GTPase activity, for replacement of GDP by GTP, and for G protein-effector interaction. The sequence is that of Guanine nucleotide-binding protein subunit gamma from Loligo forbesii (Veined squid).